Reading from the N-terminus, the 297-residue chain is Putative S-adenosyl-L-methionine-dependent methyltransferase Mmcs_1044 (297 aa).

Residues aspartate 124 and 153–154 each bind S-adenosyl-L-methionine; that span reads DL.

The protein belongs to the UPF0677 family.

Exhibits S-adenosyl-L-methionine-dependent methyltransferase activity. This Mycobacterium sp. (strain MCS) protein is Putative S-adenosyl-L-methionine-dependent methyltransferase Mmcs_1044.